Here is a 623-residue protein sequence, read N- to C-terminus: Putative ABC transporter ATP-binding protein MG014 (623 aa).

An ABC transmembrane type-1 domain is found at 16–325 (LILAPFFTFA…YIVLGFILTS (310 aa)). 6 helical membrane-spanning segments follow: residues 27–47 (IVID…VFSI), 81–101 (VLAT…LISI), 157–177 (FLRL…FAVT), 181–201 (DMSI…GILN), 266–286 (NIPF…LLVF), and 307–327 (IFAF…TSLT). The ABC transporter domain occupies 365–611 (LEFRNISFGL…CSLYQKMKES (247 aa)). 400-407 (GPTGSGKS) contacts ATP.

Belongs to the ABC transporter superfamily.

It is found in the cell membrane. This is Putative ABC transporter ATP-binding protein MG014 from Mycoplasma genitalium (strain ATCC 33530 / DSM 19775 / NCTC 10195 / G37) (Mycoplasmoides genitalium).